A 654-amino-acid chain; its full sequence is Macrolide export ATP-binding/permease protein MacB (654 aa).

The ABC transporter domain occupies 6–244 (LKVEDLTRRF…EQAAKTPSAS (239 aa)). Residue 42 to 49 (GASGSGKS) coordinates ATP. The next 4 membrane-spanning stretches (helical) occupy residues 280–300 (FLTM…VALG), 529–549 (LLIS…VMNI), 584–604 (LVCL…GFAF), and 619–639 (SIIW…FLPA).

This sequence belongs to the ABC transporter superfamily. Macrolide exporter (TC 3.A.1.122) family. Homodimer. Part of the tripartite efflux system MacAB-TolC, which is composed of an inner membrane transporter, MacB, a periplasmic membrane fusion protein, MacA, and an outer membrane component, TolC. The complex forms a large protein conduit and can translocate molecules across both the inner and outer membranes. Interacts with MacA.

The protein resides in the cell inner membrane. Its function is as follows. Part of the tripartite efflux system MacAB-TolC. MacB is a non-canonical ABC transporter that contains transmembrane domains (TMD), which form a pore in the inner membrane, and an ATP-binding domain (NBD), which is responsible for energy generation. Confers resistance against macrolides. This is Macrolide export ATP-binding/permease protein MacB from Vibrio parahaemolyticus serotype O3:K6 (strain RIMD 2210633).